A 346-amino-acid polypeptide reads, in one-letter code: [LysW]-lysine/[LysW]-ornithine hydrolase (346 aa).

Residue His68 participates in Zn(2+) binding. The active site involves Asp70. Asp92 provides a ligand contact to Zn(2+). Glu122 (proton acceptor) is an active-site residue. Zn(2+) contacts are provided by Glu123, Glu146, and His317.

Belongs to the peptidase M20A family. LysK subfamily. Zn(2+) serves as cofactor. Co(2+) is required as a cofactor.

It localises to the cytoplasm. It catalyses the reaction [amino-group carrier protein]-C-terminal-gamma-(L-lysyl)-L-glutamate + H2O = [amino-group carrier protein]-C-terminal-L-glutamate + L-lysine. The catalysed reaction is [amino-group carrier protein]-C-terminal-gamma-(L-ornithyl)-L-glutamate + H2O = [amino-group carrier protein]-C-terminal-L-glutamate + L-ornithine. Its pathway is amino-acid biosynthesis; L-lysine biosynthesis via AAA pathway; L-lysine from L-alpha-aminoadipate (Thermus route): step 5/5. It functions in the pathway amino-acid biosynthesis; L-arginine biosynthesis. Catalyzes the release of L-lysine from [LysW]-gamma-L-lysine and the release of L-ornithine from [LysW]-L-ornithine. In Saccharolobus islandicus (strain M.16.27) (Sulfolobus islandicus), this protein is [LysW]-lysine/[LysW]-ornithine hydrolase.